The primary structure comprises 43 residues: Protein PsbN (43 aa).

The helical transmembrane segment at 5–25 (TVLSIFISSLLLGITIYSIYI) threads the bilayer.

The protein belongs to the PsbN family.

The protein localises to the plastid. It localises to the chloroplast thylakoid membrane. In terms of biological role, may play a role in photosystem I and II biogenesis. The sequence is that of Protein PsbN from Gracilaria tenuistipitata var. liui (Red alga).